We begin with the raw amino-acid sequence, 209 residues long: Probable nicotinate-nucleotide adenylyltransferase (209 aa).

It belongs to the NadD family.

The catalysed reaction is nicotinate beta-D-ribonucleotide + ATP + H(+) = deamido-NAD(+) + diphosphate. It functions in the pathway cofactor biosynthesis; NAD(+) biosynthesis; deamido-NAD(+) from nicotinate D-ribonucleotide: step 1/1. Its function is as follows. Catalyzes the reversible adenylation of nicotinate mononucleotide (NaMN) to nicotinic acid adenine dinucleotide (NaAD). The protein is Probable nicotinate-nucleotide adenylyltransferase of Idiomarina loihiensis (strain ATCC BAA-735 / DSM 15497 / L2-TR).